The sequence spans 115 residues: SPbeta prophage-derived uncharacterized protein YoqS (115 aa).

This Bacillus subtilis (strain 168) protein is SPbeta prophage-derived uncharacterized protein YoqS (yoqS).